A 492-amino-acid polypeptide reads, in one-letter code: Forkhead box protein O6 (492 aa).

Disordered stretches follow at residues 1–76, 163–235, 315–338, and 466–492; these read MAAK…EVGP, SWWM…ASPA, GAGLPEGLLDGAQDAYGPRPAPRP, and FNFDSALPPPPPGLAGAPPPNQSWVPG. The fork-head DNA-binding region spans 88-182; that stretch reads WGNLSYADLI…KTGKTPRRRA (95 aa). Residue S184 is modified to Phosphoserine. Over residues 192 to 203 the composition is skewed to basic residues; it reads LRIKGKASKKKQ. Positions 225–235 are enriched in low complexity; sequence PAAAKWAASPA. The segment covering 472–486 has biased composition (pro residues); sequence LPPPPPGLAGAPPPN.

Post-translationally, phosphorylation of Ser-184 is be important in regulating the transacriptional activity.

It localises to the cytoplasm. The protein localises to the nucleus. Functionally, transcriptional activator. The chain is Forkhead box protein O6 (FOXO6) from Homo sapiens (Human).